Consider the following 200-residue polypeptide: UPF0488 protein CG14286 (200 aa).

2 disordered regions span residues 1 to 28 (MHKR…PVAE) and 139 to 174 (KDFR…AEAG).

Belongs to the UPF0488 family.

This chain is UPF0488 protein CG14286, found in Drosophila melanogaster (Fruit fly).